The following is a 648-amino-acid chain: Chaperone protein HtpG (648 aa).

The tract at residues 1-353 is a; substrate-binding; sequence MNARVEQLEF…AQDMSLNVSR (353 aa). The segment at 354-567 is b; it reads EILQQDRQIK…TFGITPALAR (214 aa). Residues 568–648 are c; sequence IYRATGQDVP…LLADRLTRTL (81 aa).

This sequence belongs to the heat shock protein 90 family. In terms of assembly, homodimer.

Its subcellular location is the cytoplasm. Molecular chaperone. Has ATPase activity. This Mycobacterium ulcerans (strain Agy99) protein is Chaperone protein HtpG.